A 122-amino-acid chain; its full sequence is Large ribosomal subunit protein uL14 (122 aa).

It belongs to the universal ribosomal protein uL14 family. As to quaternary structure, part of the 50S ribosomal subunit. Forms a cluster with proteins L3 and L19. In the 70S ribosome, L14 and L19 interact and together make contacts with the 16S rRNA in bridges B5 and B8.

In terms of biological role, binds to 23S rRNA. Forms part of two intersubunit bridges in the 70S ribosome. This Limosilactobacillus fermentum (strain NBRC 3956 / LMG 18251) (Lactobacillus fermentum) protein is Large ribosomal subunit protein uL14.